Reading from the N-terminus, the 343-residue chain is Palmitoyltransferase ZDHHC4 (343 aa).

Over 1–2 the chain is Lumenal; that stretch reads MD. The chain crosses the membrane as a helical span at residues 3–23; the sequence is FLVLFLLYLALVLLGFVMICI. Residues 24 to 67 lie on the Cytoplasmic side of the membrane; that stretch reads GSKTHYLQGLISRGAQVFSYIIPECLQRAMLSVLHYLFHTRNYT. The helical transmembrane segment at 68-88 threads the bilayer; that stretch reads FVVLHLILQGMVYTEYTWEIF. Topologically, residues 89-95 are lumenal; the sequence is GLCQQLE. The chain crosses the membrane as a helical span at residues 96–116; sequence FSLYYLFLPYLLLIVNLLFFT. Residues 117 to 196 lie on the Cytoplasmic side of the membrane; it reads LSCVTNPGTI…GAWNTRYFLS (80 aa). The region spanning 149–199 is the DHHC domain; that stretch reads VRCPTCDLRKPARSKHCSVCNRCVHRFDHHCVWVNNCIGAWNTRYFLSYLF. Cys179 acts as the S-palmitoyl cysteine intermediate in catalysis. Residues 197-217 traverse the membrane as a helical segment; it reads YLFTLTASAATMAVVSTVFLV. Residues 218–255 are Lumenal-facing; it reads RLVVMSDVYLQTYVDDLGHLQVVDTVFLVQYLFLTFPR. A helical transmembrane segment spans residues 256 to 276; that stretch reads IVFLVGFVVVLSFLLGGYLCF. Residues 277 to 343 lie on the Cytoplasmic side of the membrane; sequence CLYLAATNQT…ATACYERKEK (67 aa). The short motif at 340 to 343 is the Di-lysine motif element; it reads RKEK.

The protein belongs to the DHHC palmitoyltransferase family. Interacts with CPT1A.

It is found in the endoplasmic reticulum membrane. The protein localises to the golgi apparatus membrane. The protein resides in the cell membrane. The catalysed reaction is L-cysteinyl-[protein] + hexadecanoyl-CoA = S-hexadecanoyl-L-cysteinyl-[protein] + CoA. Palmitoyltransferase that could catalyze the addition of palmitate onto protein substrates including the D(2) dopamine receptor DRD2, GSK3B or MAVS. Mediates GSK3B palmitoylation to prevent its AKT1-mediated phosphorylation leading to activation of the STAT3 signaling pathway. Also catalyzes MAVS palmitoylation which promotes its stabilization and activation by inhibiting 'Lys-48'- but facilitating 'Lys-63'-linked ubiquitination. The protein is Palmitoyltransferase ZDHHC4 of Bos taurus (Bovine).